A 668-amino-acid chain; its full sequence is DNA ligase (668 aa).

Residues 31-35, 80-81, and Glu112 each bind NAD(+); these read DAEYD and SL. The active-site N6-AMP-lysine intermediate is the Lys114. 4 residues coordinate NAD(+): Arg135, Glu172, Lys289, and Lys313. Residues Cys407, Cys410, Cys425, and Cys431 each coordinate Zn(2+). Residues 591–668 form the BRCT domain; the sequence is SVPQPLAGKV…NEEQLIELLN (78 aa).

It belongs to the NAD-dependent DNA ligase family. LigA subfamily. Requires Mg(2+) as cofactor. It depends on Mn(2+) as a cofactor.

It catalyses the reaction NAD(+) + (deoxyribonucleotide)n-3'-hydroxyl + 5'-phospho-(deoxyribonucleotide)m = (deoxyribonucleotide)n+m + AMP + beta-nicotinamide D-nucleotide.. In terms of biological role, DNA ligase that catalyzes the formation of phosphodiester linkages between 5'-phosphoryl and 3'-hydroxyl groups in double-stranded DNA using NAD as a coenzyme and as the energy source for the reaction. It is essential for DNA replication and repair of damaged DNA. The chain is DNA ligase from Aliivibrio fischeri (strain ATCC 700601 / ES114) (Vibrio fischeri).